Here is a 3739-residue protein sequence, read N- to C-terminus: Pikromycin polyketide synthase component PikAII (3739 aa).

The 429-residue stretch at 35 to 463 (GEPVAIVGMA…GTNAHVVLEE (429 aa)) folds into the Ketosynthase family 3 (KS3) 1 domain. Module regions lie at residues 38–1517 (VAIV…EFLL) and 1542–3642 (VAIV…GHLL). Cys-208 functions as the Acyl-thioester intermediate; for beta-ketoacyl synthase 1 activity in the catalytic mechanism. Catalysis depends on for beta-ketoacyl synthase 1 activity residues His-343 and His-383. Residues 572-877 (FVFPGQGTQW…ERLVTSLAEA (306 aa)) are acyltransferase 1. The active-site Acyl-ester intermediate; for acyltransferase 1 activity is Ser-662. The interval 1150–1343 (GTVLVTGAEE…VTSVAWSPWE (194 aa)) is C2-type beta-ketoacyl reductase 1. The active-site For C2-type beta-ketoacyl reductase 1 and probable racemase activities is the Tyr-1313. One can recognise a Carrier 1 domain in the interval 1445–1520 (RRMQELVREH…TLAEFLLAEI (76 aa)). Ser-1480 is subject to O-(pantetheine 4'-phosphoryl)serine. The Ketosynthase family 3 (KS3) 2 domain occupies 1539-1967 (DEPVAIVGMA…GTNAHIVLEE (429 aa)). Residue Cys-1712 is the Acyl-thioester intermediate; for beta-ketoacyl synthase 2 activity of the active site. Catalysis depends on for beta-ketoacyl synthase 2 activity residues His-1847 and His-1887. The acyltransferase 2 stretch occupies residues 2069–2374 (FVFPGQGTQW…HRLTTSLAEA (306 aa)). Catalysis depends on Ser-2159, which acts as the Acyl-ester intermediate; for acyltransferase 2 activity. Residues 2428 to 2553 (HPLLGAAVAL…GVLAARADRT (126 aa)) form an N-terminal hotdog fold region. The segment at 2428–2703 (HPLLGAAVAL…LTVLPVDPAQ (276 aa)) is dehydratase. In terms of domain architecture, PKS/mFAS DH spans 2428 to 2705 (HPLLGAAVAL…VLPVDPAQLA (278 aa)). His-2460 (proton acceptor; for dehydratase activity) is an active-site residue. The interval 2567–2705 (AEPVDVDGLY…VLPVDPAQLA (139 aa)) is C-terminal hotdog fold. Asp-2629 (proton donor; for dehydratase activity) is an active-site residue. Residues 2959–3267 (GSLESLTAAP…QARHTGKVVL (309 aa)) form an enoyl reductase region. Tyr-3005 functions as the For enoyl reductase activity in the catalytic mechanism. Residues 3092–3109 (LLVH…VQLA), 3285–3288 (TGAL), 3309–3312 (SRRG), 3338–3339 (DV), Lys-3388, and 3412–3413 (FS) each bind NADP(+). Residues 3277 to 3458 (GTVLLTGGTG…LSLGWGLWAE (182 aa)) form a beta-ketoacyl reductase 2 region. Residue Tyr-3427 is the For beta-ketoacyl reductase 2 activity of the active site. A Carrier 2 domain is found at 3570–3645 (AHLRDLVRTH…ELAGHLLDEL (76 aa)). Position 3605 is an O-(pantetheine 4'-phosphoryl)serine (Ser-3605).

As to quaternary structure, homodimer. Pikromycin PKS consists of a combination of multimodular (PikAI and PikAII) and monomodular (PikAIII and PikAIV) polypeptides each coding for a functional synthase subunit which participates in 1 (monomodular) or 2 (multimodular) of the six FAS-like elongation steps required for formation of the polyketide. Module 1, 2, 3, 4, 5, and 6 participating in biosynthesis steps 1, 2, 3, 4, 5, and 6, respectively. Pantetheine 4'-phosphate is required as a cofactor.

It carries out the reaction 5 (S)-methylmalonyl-CoA + malonyl-CoA + 5 NADPH + 11 H(+) = 10-deoxymethynolide + 6 CO2 + 5 NADP(+) + 6 CoA + 2 H2O. The enzyme catalyses 6 (S)-methylmalonyl-CoA + malonyl-CoA + 5 NADPH + 12 H(+) = narbonolide + 7 CO2 + 5 NADP(+) + 7 CoA + 2 H2O. It functions in the pathway antibiotic biosynthesis. In terms of biological role, involved in the biosynthesis of 12- and 14-membered ring macrolactone antibiotics such as methymycin/neomethymycin and pikromycin/narbomycin, respectively. Component of the pikromycin PKS which catalyzes the biosynthesis of both precursors 10-deoxymethynolide (12-membered ring macrolactone) and narbonolide (14-membered ring macrolactone). Chain elongation through PikAI, PikAII and PikAIII followed by thioesterase catalyzed termination results in the production of 10-deoxymethynolide, while continued elongation through PikAIV, followed by thioesterase (TE) catalyzed cyclization results in the biosynthesis of the narbonolide. This Streptomyces venezuelae protein is Pikromycin polyketide synthase component PikAII.